A 152-amino-acid chain; its full sequence is Sec-independent protein translocase protein TatB (152 aa).

A helical transmembrane segment spans residues Met1–Gly21. The segment covering Glu60–Ala71 has biased composition (basic and acidic residues). Positions Glu60 to Ser152 are disordered. 2 stretches are compositionally biased toward low complexity: residues Thr84 to Asp98 and Ala124 to Ala140. Positions Lys141–Ser152 are enriched in basic and acidic residues.

Belongs to the TatB family. The Tat system comprises two distinct complexes: a TatABC complex, containing multiple copies of TatA, TatB and TatC subunits, and a separate TatA complex, containing only TatA subunits. Substrates initially bind to the TatABC complex, which probably triggers association of the separate TatA complex to form the active translocon.

The protein localises to the cell inner membrane. In terms of biological role, part of the twin-arginine translocation (Tat) system that transports large folded proteins containing a characteristic twin-arginine motif in their signal peptide across membranes. Together with TatC, TatB is part of a receptor directly interacting with Tat signal peptides. TatB may form an oligomeric binding site that transiently accommodates folded Tat precursor proteins before their translocation. This chain is Sec-independent protein translocase protein TatB, found in Zymomonas mobilis subsp. mobilis (strain ATCC 31821 / ZM4 / CP4).